The sequence spans 110 residues: Pathogenesis-related protein (110 aa).

Positions 1-19 (AFLLAATLTISSHMQEAGA) are cleaved as a signal peptide.

Belongs to the thaumatin family.

The chain is Pathogenesis-related protein from Juniperus virginiana (Eastern redcedar).